Here is a 475-residue protein sequence, read N- to C-terminus: Squamosa promoter-binding-like protein 12 (475 aa).

A disordered region spans residues 49 to 73 (NHGSTNSSGGTFTSSSELANGSSKS). Residues 51-73 (GSTNSSGGTFTSSSELANGSSKS) show a composition bias toward low complexity. Residues 177–254 (SSYCQVEGCK…SDHNARRRKP (78 aa)) form an SBP-type zinc finger. 8 residues coordinate Zn(2+): Cys-180, Cys-185, Cys-202, His-205, Cys-221, Cys-224, His-228, and Cys-240. The short motif at 237-253 (KKSCRRRLSDHNARRRK) is the Bipartite nuclear localization signal element. A disordered region spans residues 437-475 (GGGGFWQDGDDPPPLDHASQAQAFMHPGNGSSSGYGHLH). The span at 465 to 475 (NGSSSGYGHLH) shows a compositional bias: polar residues.

As to expression, expressed in young panicles.

Its subcellular location is the nucleus. Functionally, trans-acting factor that binds specifically to the consensus nucleotide sequence 5'-TNCGTACAA-3'. May be involved in panicle development. The protein is Squamosa promoter-binding-like protein 12 (SPL12) of Oryza sativa subsp. indica (Rice).